The primary structure comprises 550 residues: Hydroxylamine reductase (550 aa).

[2Fe-2S] cluster is bound by residues Cys-3, Cys-6, Cys-18, and Cys-25. Hybrid [4Fe-2O-2S] cluster is bound by residues His-249, Glu-273, Cys-317, Cys-405, Cys-433, Cys-458, Glu-492, and Lys-494. Cys-405 carries the cysteine persulfide modification.

This sequence belongs to the HCP family. [2Fe-2S] cluster serves as cofactor. Requires hybrid [4Fe-2O-2S] cluster as cofactor.

It localises to the cytoplasm. The catalysed reaction is A + NH4(+) + H2O = hydroxylamine + AH2 + H(+). Functionally, catalyzes the reduction of hydroxylamine to form NH(3) and H(2)O. The protein is Hydroxylamine reductase of Salmonella typhimurium (strain LT2 / SGSC1412 / ATCC 700720).